Reading from the N-terminus, the 172-residue chain is MSRGLYPGRFQPFHLGHLNVIKWSLERVDELIILVGSSQESHTVTNPFTAGERVEMIRNSLKDVGMDLSRIYIIPMPDILMNNIWAHYVSTYTPKFEVVFARNPLVVRIFKEAGYKVEIPPAFNREKYNSTYIRRLIILNDNWSELVPKPVYKYILEIKGDQRLREIVGTDK.

It belongs to the archaeal NMN adenylyltransferase family.

The protein localises to the cytoplasm. The enzyme catalyses beta-nicotinamide D-ribonucleotide + ATP + H(+) = diphosphate + NAD(+). It participates in cofactor biosynthesis; NAD(+) biosynthesis; NAD(+) from nicotinamide D-ribonucleotide: step 1/1. The protein is Nicotinamide-nucleotide adenylyltransferase of Saccharolobus solfataricus (strain ATCC 35092 / DSM 1617 / JCM 11322 / P2) (Sulfolobus solfataricus).